Consider the following 295-residue polypeptide: 4-hydroxy-tetrahydrodipicolinate synthase (295 aa).

A pyruvate-binding site is contributed by Thr46. Tyr135 (proton donor/acceptor) is an active-site residue. Lys164 serves as the catalytic Schiff-base intermediate with substrate. Residue Ile205 participates in pyruvate binding.

It belongs to the DapA family. As to quaternary structure, homotetramer; dimer of dimers.

The protein resides in the cytoplasm. The enzyme catalyses L-aspartate 4-semialdehyde + pyruvate = (2S,4S)-4-hydroxy-2,3,4,5-tetrahydrodipicolinate + H2O + H(+). It functions in the pathway amino-acid biosynthesis; L-lysine biosynthesis via DAP pathway; (S)-tetrahydrodipicolinate from L-aspartate: step 3/4. Functionally, catalyzes the condensation of (S)-aspartate-beta-semialdehyde [(S)-ASA] and pyruvate to 4-hydroxy-tetrahydrodipicolinate (HTPA). This Aliarcobacter butzleri (strain RM4018) (Arcobacter butzleri) protein is 4-hydroxy-tetrahydrodipicolinate synthase.